We begin with the raw amino-acid sequence, 206 residues long: MSSRVVKSRSKNPYAAVQVDPDSDYITPGTLDLEQLFWTSTGAQYAHVNQVWPSVYVGDEKTALERPGLRVLGITHVLNAAEGKWNNVLTGAHYYTDMDIQYFGVEADDKPTFNISQFFCSATQFIHEALSHPKVLVHCVMGRSRSAALVLAYLMMEHGLTVVDAIEHVRQRRCVLPNHGFLRQLRALDITLQEDRLRQKRGMQEQ.

The Tyrosine-protein phosphatase domain maps to 47–194 (HVNQVWPSVY…LRALDITLQE (148 aa)). 138 to 145 (HCVMGRSR) provides a ligand contact to substrate. Cysteine 139 acts as the Phosphocysteine intermediate in catalysis.

The protein belongs to the protein-tyrosine phosphatase family. Non-receptor class dual specificity subfamily.

Its subcellular location is the cytoplasm. The protein resides in the nucleus. The enzyme catalyses O-phospho-L-tyrosyl-[protein] + H2O = L-tyrosyl-[protein] + phosphate. It carries out the reaction O-phospho-L-seryl-[protein] + H2O = L-seryl-[protein] + phosphate. The catalysed reaction is O-phospho-L-threonyl-[protein] + H2O = L-threonyl-[protein] + phosphate. Functionally, dual specificity phosphatase able to dephosphorylate phosphotyrosine, phosphoserine and phosphothreonine residues within the same substrate, with a preference for phosphotyrosine as a substrate. Involved in the modulation of AMPK and MAPK1/2 signaling pathways. The protein is Dual specificity phosphatase 29 (dusp29) of Gasterosteus aculeatus (Three-spined stickleback).